A 106-amino-acid chain; its full sequence is MMTLVPRARTRAGQDHYSHPCPRFSQVLLTEGIMTYCLTKNLSDVNILHRLLKNGNVRNTLLQSKVGLLTYYVKLYPGEVTLLTRPSIQMRLCCITGSVSRPRSQK.

The protein belongs to the VCX/VCY family. In terms of assembly, interacts with MAP1S. Interacts with UBE3A (via HECT domain). Expressed exclusively in testis. Expressed in ejaculated spermatozoa of germ cell. Expressed in the nuclei of spermatogonia, spermatocytes, and round spermatids, except elongated spermatids (at protein level).

This chain is Testis-specific basic protein Y 2 (BPY2), found in Homo sapiens (Human).